The chain runs to 430 residues: Probable sugar isomerase mlr5709 (430 aa).

Residues histidine 257, aspartate 289, and aspartate 291 each coordinate Mn(2+).

Belongs to the rhamnose isomerase family. It depends on Mn(2+) as a cofactor.

The polypeptide is Probable sugar isomerase mlr5709 (Mesorhizobium japonicum (strain LMG 29417 / CECT 9101 / MAFF 303099) (Mesorhizobium loti (strain MAFF 303099))).